Here is a 285-residue protein sequence, read N- to C-terminus: TATA box-binding protein-associated factor RNA polymerase I subunit D (285 aa).

2 disordered regions span residues Met1 to Thr49 and Lys85 to Ile112. The segment covering Gly21–Pro39 has biased composition (polar residues). Residue Ser24 is modified to Phosphoserine. Basic residues predominate over residues Lys85–Gly104. Ser134 bears the Phosphoserine mark. The tract at residues His193–Ser219 is disordered. Residue Ser229 is modified to Phosphoserine. Basic and acidic residues-rich tracts occupy residues Asn242 to Thr264 and Lys273 to Ser285. The interval Asn242 to Ser285 is disordered.

As to quaternary structure, component of the transcription factor SL1/TIF-IB complex, composed of TBP and at least TAF1A, TAF1B, TAF1C and TAF1D. Interacts with UBTF.

The protein resides in the nucleus. In terms of biological role, component of the transcription factor SL1/TIF-IB complex, which is involved in the assembly of the PIC (preinitiation complex) during RNA polymerase I-dependent transcription. The rate of PIC formation probably is primarily dependent on the rate of association of SL1/TIF-IB with the rDNA promoter. SL1/TIF-IB is involved in stabilization of nucleolar transcription factor 1/UBTF on rDNA. Formation of SL1/TIF-IB excludes the association of TBP with TFIID subunits. The sequence is that of TATA box-binding protein-associated factor RNA polymerase I subunit D (Taf1d) from Rattus norvegicus (Rat).